A 158-amino-acid polypeptide reads, in one-letter code: Pyruvoyl-dependent arginine decarboxylase (158 aa).

S44 is subject to Pyruvic acid (Ser).

The protein belongs to the PdaD family. It depends on pyruvate as a cofactor.

It catalyses the reaction L-arginine + H(+) = agmatine + CO2. This Pyrococcus horikoshii (strain ATCC 700860 / DSM 12428 / JCM 9974 / NBRC 100139 / OT-3) protein is Pyruvoyl-dependent arginine decarboxylase.